The chain runs to 452 residues: Probable ECA polymerase (452 aa).

11 consecutive transmembrane segments (helical) span residues 6–26 (FSGL…LTWF), 37–57 (VFFS…TSVL), 63–83 (VGVA…CFYG), 118–138 (VILM…NGFL), 155–175 (GVAL…VYFL), 181–201 (AWLF…MIVG), 207–227 (IIIA…ISLW), 228–248 (MLAA…LKRY), 341–361 (LVVM…GLII), 378–398 (YKAA…IVLA), and 410–430 (VFFL…FWLF).

It belongs to the WzyE family. As to quaternary structure, probably part of a complex composed of WzxE, WzyE and WzzE.

It localises to the cell inner membrane. The protein operates within bacterial outer membrane biogenesis; enterobacterial common antigen biosynthesis. Probably involved in the polymerization of enterobacterial common antigen (ECA) trisaccharide repeat units. The chain is Probable ECA polymerase from Salmonella heidelberg (strain SL476).